The chain runs to 668 residues: MADELFCKVLSIGIKCRECEDRRANVRLTVESRSSSNPVHKKELVVRLSDDTDPFFLYNLTLGEEDFQSLKNQQGLLVEFSAFPQRFIDLLEQCILEQEKPVPRFLLQLAMSSNALDCMPASLNIIETNPFKHLIHLSLKLLAGSDSDVKKYLATCIKNLKLENCTLKEKLHKSEEDLSKRLGVTQQALAEKCKELDKLRNEWASQTSLLTSKHTQEIGAEREKALQIQTQYQLQYEQQKKELETTSSRTVHHLESRVSELEAVNKDLTERKYKSESCIRELKGKLSGIEEEYHRAKQEVTSLRRENATLDSECHEKEKLINQLKTKTAVLEQEVKDKEHVIIRSVDACESAQEHKKKLEDSLEQKQMQTGKLETTVKSLSEELIKANEIIKKLQTDMKKLMEKIKLKNAVTMQQEKLLGEKEQTLQKEKLELTNVKHLLKIKEEEMLKLKEQLDSTTEKLEESKQQLKTNENVIAWLNKQLNENKIATLQGPHGLHEMPSSLKTVGSASNVGVMQSTQPQFTIGNDPYMVSPITQPIGSAFVSNFYPKNFAPGMSAPSSISLGTRLNPQAAFKANVRFNQSPTALCSPAVEPRPAPSTSTPILPSTSCDPVGLDMKYLKKNGSVPVKGQRNGSSAGTVPVRPALPKSGSSPILSAYFPGQQSRLPAS.

In terms of domain architecture, PISA spans 39 to 91 (VHKKELVVRLSDDTDPFFLYNLTLGEEDFQSLKNQQGLLVEFSAFPQRFIDLL). Residues 182-482 (LGVTQQALAE…NVIAWLNKQL (301 aa)) are a coiled coil. The disordered stretch occupies residues 623 to 668 (GSVPVKGQRNGSSAGTVPVRPALPKSGSSPILSAYFPGQQSRLPAS).

As to quaternary structure, nine homodimers form a cartwheel structure with an internal diameter of 23 nM and radial spokes connecting to the microtubule triplets.

The protein resides in the cytoplasm. The protein localises to the cytoskeleton. It localises to the microtubule organizing center. Its subcellular location is the centrosome. Its function is as follows. Central scaffolding component of the centrioles ensuring their 9-fold symmetry. Required for centrosome biogenesis and duplication: required both for mother-centriole-dependent centriole duplication and deuterosome-dependent centriole amplification in multiciliated cells. In Xenopus laevis (African clawed frog), this protein is Spindle assembly abnormal protein 6 homolog (sas6).